A 467-amino-acid chain; its full sequence is Neurexin-1-beta (467 aa).

Positions 1–45 are cleaved as a signal peptide; that stretch reads MYQRMLRCGAELGSPGGGGGGAGGRLALLWIVPLTLSGLLGVAWG. Over 46–391 the chain is Extracellular; that stretch reads ASSLGAHHIH…EVIRESSSTT (346 aa). A Laminin G-like domain is found at 86-284; sequence YIFSKGGGQI…DANIAIVGNV (199 aa). Positions 136 and 153 each coordinate Ca(2+). Asparagine 183 carries an N-linked (GlcNAc...) asparagine glycan. Positions 200–229 are essential for interaction with CBLN1; modulates interaction affinity with NLGN1, NLGN2 and NLGN3; prevents interaction with DAG1/alpha-dystroglycan; modulates interaction with alpha-latrotoxin; that stretch reads GNNDNERLAIARQRIPYRLGRVVDEWLLDK. Ca(2+) contacts are provided by isoleucine 235 and asparagine 237. Residues 318–380 form a disordered region; the sequence is LATSTARRGN…AGGREPYPGS (63 aa). Residues 324–339 show a composition bias toward polar residues; that stretch reads RRGNSPTKEPVSQTTD. Serine 345 carries an O-linked (Xyl...) (heparan sulfate) serine glycan. Residues 392 to 412 traverse the membrane as a helical segment; that stretch reads GMVVGIVAAAALCILILLYAM. Residues 413–467 are Cytoplasmic-facing; sequence YKYRNRDEGSYHVDESRNYISNSAQSNGAVVKEKQPSSAKSANKNKKNKDKEYYV. The disordered stretch occupies residues 434–467; it reads NSAQSNGAVVKEKQPSSAKSANKNKKNKDKEYYV. Residues serine 449, serine 450, and serine 453 each carry the phosphoserine modification.

It belongs to the neurexin family. In terms of assembly, the cytoplasmic C-terminal region binds to CASK. Binds NLGN1, NLGN2 and NLGN3, DAG1 (alpha-dystroglycan) and alpha-latrotoxin. Binding to neuroligins is calcium-dependent, and the binding preference ranks as follow: NLGN1 &gt; NLGN4 &gt;&gt; NLGN3 &gt; NLGN2. Interacts with CBLN2 and more weakly with CBLN4. Interacts with CBLN1; interaction is CBLN1 hexamer form-dependent; CBLN1-binding is calcium-independent; isoform 1b does not interact with CBLN1. Interacts with CLSTN3. O-glycosylated; contains heparan sulfate. Heparan sulfate attachment is required for synapse development by mediating interactions with neuroligins.

The protein resides in the presynaptic cell membrane. Functionally, neuronal cell surface protein involved in cell recognition and cell adhesion by forming intracellular junctions through binding to neuroligins. Plays a role in formation of synaptic junctions. Functions as part of a trans-synaptic complex by binding to cerebellins and postsynaptic GRID1. This interaction helps regulate the activity of NMDA and AMPA receptors at hippocampal synapses without affecting synapse formation. NRXN1B-CBLN2-GRID1 complex transduce presynaptic signals into postsynaptic NMDAR response. The protein is Neurexin-1-beta of Bos taurus (Bovine).